The chain runs to 227 residues: Ribose-5-phosphate isomerase A (227 aa).

Substrate is bound by residues 26-29 (TGST), 82-85 (DGAD), and 95-98 (KGGG). Catalysis depends on Glu-104, which acts as the Proton acceptor. Residue Lys-122 participates in substrate binding.

It belongs to the ribose 5-phosphate isomerase family. Homodimer.

It carries out the reaction aldehydo-D-ribose 5-phosphate = D-ribulose 5-phosphate. The protein operates within carbohydrate degradation; pentose phosphate pathway; D-ribose 5-phosphate from D-ribulose 5-phosphate (non-oxidative stage): step 1/1. In terms of biological role, catalyzes the reversible conversion of ribose-5-phosphate to ribulose 5-phosphate. This Streptococcus pyogenes serotype M5 (strain Manfredo) protein is Ribose-5-phosphate isomerase A.